The chain runs to 488 residues: Protein nucleotidyltransferase YdiU (488 aa).

ATP-binding residues include glycine 91, glycine 93, arginine 94, lysine 114, aspartate 126, glycine 127, arginine 177, and arginine 184. Catalysis depends on aspartate 253, which acts as the Proton acceptor. Positions 254 and 263 each coordinate Mg(2+). Position 263 (aspartate 263) interacts with ATP.

Belongs to the SELO family. It depends on Mg(2+) as a cofactor. The cofactor is Mn(2+).

The enzyme catalyses L-seryl-[protein] + ATP = 3-O-(5'-adenylyl)-L-seryl-[protein] + diphosphate. It catalyses the reaction L-threonyl-[protein] + ATP = 3-O-(5'-adenylyl)-L-threonyl-[protein] + diphosphate. The catalysed reaction is L-tyrosyl-[protein] + ATP = O-(5'-adenylyl)-L-tyrosyl-[protein] + diphosphate. It carries out the reaction L-histidyl-[protein] + UTP = N(tele)-(5'-uridylyl)-L-histidyl-[protein] + diphosphate. The enzyme catalyses L-seryl-[protein] + UTP = O-(5'-uridylyl)-L-seryl-[protein] + diphosphate. It catalyses the reaction L-tyrosyl-[protein] + UTP = O-(5'-uridylyl)-L-tyrosyl-[protein] + diphosphate. Its function is as follows. Nucleotidyltransferase involved in the post-translational modification of proteins. It can catalyze the addition of adenosine monophosphate (AMP) or uridine monophosphate (UMP) to a protein, resulting in modifications known as AMPylation and UMPylation. This Bacillus mycoides (strain KBAB4) (Bacillus weihenstephanensis) protein is Protein nucleotidyltransferase YdiU.